Consider the following 713-residue polypeptide: Ribosomal RNA large subunit methyltransferase K/L (713 aa).

Positions 43–154 (LLYRALLWSR…RDQVMLSLDL (112 aa)) constitute a THUMP domain.

This sequence belongs to the methyltransferase superfamily. RlmKL family.

It localises to the cytoplasm. The enzyme catalyses guanosine(2445) in 23S rRNA + S-adenosyl-L-methionine = N(2)-methylguanosine(2445) in 23S rRNA + S-adenosyl-L-homocysteine + H(+). It carries out the reaction guanosine(2069) in 23S rRNA + S-adenosyl-L-methionine = N(2)-methylguanosine(2069) in 23S rRNA + S-adenosyl-L-homocysteine + H(+). In terms of biological role, specifically methylates the guanine in position 2445 (m2G2445) and the guanine in position 2069 (m7G2069) of 23S rRNA. The protein is Ribosomal RNA large subunit methyltransferase K/L of Sodalis glossinidius (strain morsitans).